The chain runs to 500 residues: Lysine--tRNA ligase (500 aa).

Mg(2+) contacts are provided by Glu-407 and Glu-414.

Belongs to the class-II aminoacyl-tRNA synthetase family. Homodimer. The cofactor is Mg(2+).

The protein resides in the cytoplasm. The catalysed reaction is tRNA(Lys) + L-lysine + ATP = L-lysyl-tRNA(Lys) + AMP + diphosphate. This Azobacteroides pseudotrichonymphae genomovar. CFP2 protein is Lysine--tRNA ligase.